The chain runs to 193 residues: MPRLIFLGPPGAGKGTQAERLAAIYHTPKISTGDLLRAEVKAQTPLGCQAKVYMDAGELVPDEVLIGMVKGQLQQSPEQGWILDGFPRTLAQAEALEELLQELGQDYDYVLNLEVPDEVVVARLLARGKEQGRSDDADRSVILKRLEVYRQQTAPLIDFYEAKGRLQRVNGNQPMESVQEHLQALLEGFRRTA.

11 to 16 (GAGKGT) lines the ATP pocket. Residues 31–60 (STGDLLRAEVKAQTPLGCQAKVYMDAGELV) form an NMP region. Residues Thr-32, Arg-37, 58 to 60 (ELV), 85 to 88 (GFPR), and Gln-92 contribute to the AMP site. The interval 126 to 136 (ARGKEQGRSDD) is LID. ATP is bound at residue Arg-127. AMP-binding residues include Arg-133 and Arg-145. Residue Gln-173 coordinates ATP.

Belongs to the adenylate kinase family. In terms of assembly, monomer.

Its subcellular location is the cytoplasm. The enzyme catalyses AMP + ATP = 2 ADP. It participates in purine metabolism; AMP biosynthesis via salvage pathway; AMP from ADP: step 1/1. In terms of biological role, catalyzes the reversible transfer of the terminal phosphate group between ATP and AMP. Plays an important role in cellular energy homeostasis and in adenine nucleotide metabolism. This Synechococcus sp. (strain JA-2-3B'a(2-13)) (Cyanobacteria bacterium Yellowstone B-Prime) protein is Adenylate kinase.